Here is a 131-residue protein sequence, read N- to C-terminus: Classical arabinogalactan protein 1 (131 aa).

An N-terminal signal peptide occupies residues 1–22; sequence MAFSKSLVFVLLAALLISSAVA. Residues 22 to 110 form a disordered region; it reads AQSPAPAPSN…APGPAQGGAV (89 aa). The segment covering 50-60 has biased composition (pro residues); the sequence is APAPEVSPSPS. Positions 61–72 are enriched in low complexity; sequence PAAALTPESSAS. G108 is lipidated: GPI-anchor amidated glycine. A propeptide spans 109–131 (removed in mature form); the sequence is AVSNKFASFGSVAVMLTAAVLVI.

Belongs to the classical AGP family. In terms of processing, O-glycosylated on the hydroxyproline residues. Predominantly expressed in flowers and at a lower level in roots and leaves.

It is found in the cell membrane. Proteoglycan that seems to be implicated in diverse developmental roles such as differentiation, cell-cell recognition, embryogenesis and programmed cell death. The sequence is that of Classical arabinogalactan protein 1 (AGP1) from Arabidopsis thaliana (Mouse-ear cress).